Reading from the N-terminus, the 370-residue chain is Allatostatins (370 aa).

The signal sequence occupies residues 1-27; it reads MSGPRTCFCLPSALVLVLLSLSTSALG. The propeptide occupies 28 to 65; that stretch reads TAPEPSGVHEESPAGGGTDLLPHPEDLSASDNPDLEFV. Residues 29–58 are disordered; sequence APEPSGVHEESPAGGGTDLLPHPEDLSASD. Leucine amide is present on residues Leu-73, Leu-94, Leu-105, and Leu-117. Residues 121–151 constitute a propeptide that is removed on maturation; it reads DYDYYGEEDEDDQQAIGDEDIEESDVGDLMD. A leucine amide mark is found at Leu-161, Leu-172, Leu-188, Leu-200, Leu-213, and Leu-232. The propeptide occupies 236-251; that stretch reads SDDIDFRELEEKFAED. The residue at position 264 (Leu-264) is a Leucine amide. The propeptide occupies 268–345; it reads EVEPSELEAV…ITPEEFSRMV (78 aa). The disordered stretch occupies residues 273-298; that stretch reads ELEAVRNEEKDNSSVHDKKNNTNDMH. Leu-353 is subject to Leucine amide. Isoleucine amide is present on Ile-364. Residues 368-370 constitute a propeptide that is removed on maturation; the sequence is SER.

Belongs to the allatostatin family. In terms of tissue distribution, brain, subesophageal ganglion and corpus allatum.

The protein localises to the secreted. In terms of biological role, neuropeptide inhibitors of juvenile hormone synthesis and gut muscle contraction. In Diploptera punctata (Pacific beetle cockroach), this protein is Allatostatins.